We begin with the raw amino-acid sequence, 315 residues long: MKWSEVCVHTTQEAIEAVSNILHEAGASGVVIEDVEDFEMMSHREDNFGEIWDEKKRDEYPDSGVLVKAYLAESSDLTDTIKGIERDIQMLTKFGLTIGAGTVTLTQVDEEDWAHSWKQFYKPVKISRHLTVVPMWEEYTPQPDEKIIELDPGMAFGTGTHPTTVLCIQAIENYLQDNDRVVDVGTGSGVLAIAAAKLGAKDVFALDLDEVAVRSATDNVALNKVSQQVTVRQGDLMKELKEPVELIVANILAEVILLFVNDAYELTLPGGHFIASGIIGQKKEMVRDAMVAAGFTIVETTKLEDWVAIIAKREA.

4 residues coordinate S-adenosyl-L-methionine: threonine 164, glycine 185, aspartate 207, and asparagine 250.

Belongs to the methyltransferase superfamily. PrmA family.

The protein localises to the cytoplasm. It catalyses the reaction L-lysyl-[protein] + 3 S-adenosyl-L-methionine = N(6),N(6),N(6)-trimethyl-L-lysyl-[protein] + 3 S-adenosyl-L-homocysteine + 3 H(+). Functionally, methylates ribosomal protein L11. The polypeptide is Ribosomal protein L11 methyltransferase (Exiguobacterium sibiricum (strain DSM 17290 / CCUG 55495 / CIP 109462 / JCM 13490 / 255-15)).